Reading from the N-terminus, the 120-residue chain is Large ribosomal subunit protein uL22 (120 aa).

Belongs to the universal ribosomal protein uL22 family. As to quaternary structure, part of the 50S ribosomal subunit.

Functionally, this protein binds specifically to 23S rRNA; its binding is stimulated by other ribosomal proteins, e.g. L4, L17, and L20. It is important during the early stages of 50S assembly. It makes multiple contacts with different domains of the 23S rRNA in the assembled 50S subunit and ribosome. In terms of biological role, the globular domain of the protein is located near the polypeptide exit tunnel on the outside of the subunit, while an extended beta-hairpin is found that lines the wall of the exit tunnel in the center of the 70S ribosome. The sequence is that of Large ribosomal subunit protein uL22 from Borreliella afzelii (strain PKo) (Borrelia afzelii).